The chain runs to 286 residues: MVSTVSQVSRTASHDAGGSAAAGLAAMAASRVMVESQPKIAVRNLDFYYGSHKALKSISLDVHERQVLGMIGPSGCGKSTLLRILNKMYALYPGQRAEGEVLLDGENVLGKDVDVNVLRSRVGMVFQKPTPFPMSIYENIAFGIRLHEKLSKAEMDERIEWSLTRAALWSEVKDRLHTAAAGMSGGQQQRLCIARTIAVKPEVILLDEPTSALDPISTLKIEELVDELKRDFTIAIVTHNMQQAARCADRVAFFYMGELVEVGTALDMFTNPREQRTQEYITGRFG.

The 242-residue stretch at Ile40–Ile281 folds into the ABC transporter domain. Gly72–Ser79 contributes to the ATP binding site.

Belongs to the ABC transporter superfamily. Phosphate importer (TC 3.A.1.7) family. In terms of assembly, the complex is composed of two ATP-binding proteins (PstB), two transmembrane proteins (PstC and PstA) and a solute-binding protein (PstS).

The protein localises to the cell inner membrane. The catalysed reaction is phosphate(out) + ATP + H2O = ADP + 2 phosphate(in) + H(+). Its function is as follows. Part of the ABC transporter complex PstSACB involved in phosphate import. Responsible for energy coupling to the transport system. The protein is Phosphate import ATP-binding protein PstB of Granulibacter bethesdensis (strain ATCC BAA-1260 / CGDNIH1).